A 556-amino-acid chain; its full sequence is DNA ligase B (556 aa).

Lys-124 acts as the N6-AMP-lysine intermediate in catalysis.

This sequence belongs to the NAD-dependent DNA ligase family. LigB subfamily.

The catalysed reaction is NAD(+) + (deoxyribonucleotide)n-3'-hydroxyl + 5'-phospho-(deoxyribonucleotide)m = (deoxyribonucleotide)n+m + AMP + beta-nicotinamide D-nucleotide.. Catalyzes the formation of phosphodiester linkages between 5'-phosphoryl and 3'-hydroxyl groups in double-stranded DNA using NAD as a coenzyme and as the energy source for the reaction. The polypeptide is DNA ligase B (Pseudomonas fluorescens (strain ATCC BAA-477 / NRRL B-23932 / Pf-5)).